We begin with the raw amino-acid sequence, 570 residues long: Low-affinity glucose transporter HXT1 (570 aa).

Polar residues predominate over residues Met1–Glu20. The segment at Met1–Ala51 is disordered. Over Met1 to Gly60 the chain is Cytoplasmic. A phosphoserine mark is found at Ser23, Ser38, and Ser44. Residues Gly34–Leu43 are compositionally biased toward basic and acidic residues. The helical transmembrane segment at Val61–Trp81 threads the bilayer. Topologically, residues Asp82 to Gly116 are extracellular. The helical transmembrane segment at Leu117–Gly137 threads the bilayer. The Cytoplasmic segment spans residues Asp138–Arg143. The chain crosses the membrane as a helical span at residues Ile144–Ile164. Residues Asn165–Arg174 lie on the Extracellular side of the membrane. The chain crosses the membrane as a helical span at residues Ile175 to Val195. Residues Ala196–Arg201 lie on the Cytoplasmic side of the membrane. Residues Gly202–Thr222 traverse the membrane as a helical segment. Over Asn223–Arg236 the chain is Extracellular. Asn228 is a glycosylation site (N-linked (GlcNAc...) asparagine). A helical membrane pass occupies residues Val237–Pro257. The Cytoplasmic segment spans residues Glu258–Asp340. The helical transmembrane segment at Asn341–Ser357 threads the bilayer. The Extracellular segment spans residues Asp358 to Ser363. Residues Ile364–Val381 traverse the membrane as a helical segment. Residues Asp382–Asn388 are Cytoplasmic-facing. Residues Cys389–Val409 form a helical membrane-spanning segment. Over Thr410–Val431 the chain is Extracellular. Residues Phe432–Ile452 form a helical membrane-spanning segment. Over Ser453 to Ser469 the chain is Cytoplasmic. Residues Ala470–Ile490 form a helical membrane-spanning segment. Position 491 (Asn491) is a topological domain, extracellular. Residues Phe492–Phe512 traverse the membrane as a helical segment. Topologically, residues Val513–Lys570 are cytoplasmic.

It belongs to the major facilitator superfamily. Sugar transporter (TC 2.A.1.1) family.

Its subcellular location is the membrane. In terms of biological role, low-affinity glucose transporter. HXT1 is as well involved in the transport of mannose. The protein is Low-affinity glucose transporter HXT1 (HXT1) of Saccharomyces cerevisiae (strain ATCC 204508 / S288c) (Baker's yeast).